A 161-amino-acid chain; its full sequence is uncharacterized protein (161 aa).

This is an uncharacterized protein from Rickettsia conorii (strain ATCC VR-613 / Malish 7).